A 483-amino-acid polypeptide reads, in one-letter code: Pentatricopeptide repeat-containing protein At5g18950 (483 aa).

PPR repeat units follow at residues 144 to 178, 179 to 213, 218 to 246, 247 to 281, 282 to 316, 317 to 351, 352 to 386, 387 to 421, and 422 to 456; these read EPTL…GISS, SVVT…EFDS, CLIR…GLDP, GQYV…NHFP, SMYI…GYAP, DRVV…GMRP, NEFA…GYGG, TMLS…GVTP, and NAIT…GLKP.

Belongs to the PPR family. P subfamily.

This is Pentatricopeptide repeat-containing protein At5g18950 from Arabidopsis thaliana (Mouse-ear cress).